The primary structure comprises 133 residues: Small ribosomal subunit protein uS8 (133 aa).

It belongs to the universal ribosomal protein uS8 family. As to quaternary structure, part of the 30S ribosomal subunit. Contacts proteins S5 and S12.

One of the primary rRNA binding proteins, it binds directly to 16S rRNA central domain where it helps coordinate assembly of the platform of the 30S subunit. In Synechocystis sp. (strain ATCC 27184 / PCC 6803 / Kazusa), this protein is Small ribosomal subunit protein uS8.